Reading from the N-terminus, the 463-residue chain is 6-phosphofructo-2-kinase/fructose-2,6-bisphosphatase 3 (463 aa).

The segment at 1-246 (MPLELTQSRV…VYYLMNIHWQ (246 aa)) is 6-phosphofructo-2-kinase. ATP is bound at residue 42–50 (GLPARGKTY). 2 residues coordinate beta-D-fructose 6-phosphate: arginine 75 and arginine 99. Aspartate 125 is an active-site residue. Positions 127 and 133 each coordinate beta-D-fructose 6-phosphate. The active site involves cysteine 155. ATP is bound at residue 164–169 (NIMEVK). The beta-D-fructose 6-phosphate site is built by lysine 169, arginine 191, and tyrosine 195. The tract at residues 247–463 (PRTIYLCRHG…PNPLMRSNSH (217 aa)) is fructose-2,6-bisphosphatase. A beta-D-fructose 2,6-bisphosphate-binding site is contributed by arginine 254. Residue histidine 255 is the Tele-phosphohistidine intermediate of the active site. Beta-D-fructose 2,6-bisphosphate-binding residues include asparagine 261 and glycine 267. Glutamate 324 serves as the catalytic Proton donor/acceptor. Tyrosine 335 lines the beta-D-fructose 2,6-bisphosphate pocket. 346-349 (YALA) contributes to the ATP binding site. 3 residues coordinate beta-D-fructose 2,6-bisphosphate: lysine 353, tyrosine 364, and glutamine 390. ATP-binding positions include 390–394 (QAVCV) and tyrosine 426. The disordered stretch occupies residues 444–463 (RERSEDAKKGPNPLMRSNSH). Residue serine 462 is modified to Phosphoserine; by AMPK and PKA.

This sequence in the C-terminal section; belongs to the phosphoglycerate mutase family. Homodimer. Forms a heterodimer with PFKFB2. Post-translationally, phosphorylation by AMPK stimulates activity. Brain.

It catalyses the reaction beta-D-fructose 2,6-bisphosphate + H2O = beta-D-fructose 6-phosphate + phosphate. The catalysed reaction is beta-D-fructose 6-phosphate + ATP = beta-D-fructose 2,6-bisphosphate + ADP + H(+). Its function is as follows. Catalyzes both the synthesis and degradation of fructose 2,6-bisphosphate. The polypeptide is 6-phosphofructo-2-kinase/fructose-2,6-bisphosphatase 3 (PFKFB3) (Bos taurus (Bovine)).